Here is a 130-residue protein sequence, read N- to C-terminus: Encapsulin nanocompartment cargo protein EncC (130 aa).

Glutamate 31, glutamate 61, and histidine 64 together coordinate Fe cation. The Di-iron-binding motif motif lies at 61 to 64 (EREH). Residues 103–130 (EAVGKEGAAPSPADVTPEKRLTVGSLRR) are disordered. The tract at residues 123–130 (LTVGSLRR) is probable targeting peptide.

This sequence belongs to the ferritin-like superfamily.

Its subcellular location is the encapsulin nanocompartment. In terms of biological role, cargo protein of a type 1 encapsulin nanocompartment. May help nucleate Fe atoms in the interior of the encapsulin nanocompartment. Present in about 92 copies/encapsulin nanocompartment. The polypeptide is Encapsulin nanocompartment cargo protein EncC (Myxococcus xanthus (strain DK1622)).